A 381-amino-acid chain; its full sequence is MATNIRKTHPLLKIINHALVDLPAPSNISAWWNFGSLLVLCLAVQILTGLFLAMHYTADISLAFSSVIHICRDVNYGWLIRNIHANGASLFFICIYLHIARGLYYGSYLLKETWNIGVILLFLLMATAFVGYVLPWGQMSFWGATVITNLLSAFPYIGDTLVQWIWGGFSIDNATLTRFFAFHFLLPFLIIALTMLHFLFLHETGSNNPLGLNSDMDKIPFHPYFTYKDILGFFTMTLFLGALVLFLPNLLGDAENFIPANPLVTPPHIKPEWYFLFAYAILRSIPNKLGGVLALLFSILMLLLVPFLHTSKQRTNTFRPLTQLLFWTLVANTIILTWIGGQPVEQPFIFIGQIASITYFSLFLIITPFISWCENKILSLN.

The next 4 helical transmembrane spans lie at F34 to M54, W78 to I99, W114 to L134, and F179 to L199. The heme b site is built by H84 and H98. Heme b contacts are provided by H183 and H197. H202 lines the a ubiquinone pocket. Helical transmembrane passes span Y227–L247, L289–H309, L321–G341, and F348–P368.

It belongs to the cytochrome b family. As to quaternary structure, the cytochrome bc1 complex contains 3 respiratory subunits (MT-CYB, CYC1 and UQCRFS1), 2 core proteins (UQCRC1 and UQCRC2) and probably 6 low-molecular weight proteins. Heme b is required as a cofactor.

The protein localises to the mitochondrion inner membrane. In terms of biological role, component of the ubiquinol-cytochrome c reductase complex (complex III or cytochrome b-c1 complex) that is part of the mitochondrial respiratory chain. The b-c1 complex mediates electron transfer from ubiquinol to cytochrome c. Contributes to the generation of a proton gradient across the mitochondrial membrane that is then used for ATP synthesis. The sequence is that of Cytochrome b (mt-cyb) from Heterodontus francisci (Horn shark).